Reading from the N-terminus, the 494-residue chain is Probable cytosol aminopeptidase (494 aa).

Mn(2+) is bound by residues Lys-260 and Asp-265. The active site involves Lys-272. Residues Asp-283, Asp-342, and Glu-344 each coordinate Mn(2+). Arg-346 is an active-site residue.

This sequence belongs to the peptidase M17 family. Mn(2+) serves as cofactor.

It is found in the cytoplasm. The catalysed reaction is Release of an N-terminal amino acid, Xaa-|-Yaa-, in which Xaa is preferably Leu, but may be other amino acids including Pro although not Arg or Lys, and Yaa may be Pro. Amino acid amides and methyl esters are also readily hydrolyzed, but rates on arylamides are exceedingly low.. The enzyme catalyses Release of an N-terminal amino acid, preferentially leucine, but not glutamic or aspartic acids.. Its function is as follows. Presumably involved in the processing and regular turnover of intracellular proteins. Catalyzes the removal of unsubstituted N-terminal amino acids from various peptides. The protein is Probable cytosol aminopeptidase of Bacillus cereus (strain Q1).